The sequence spans 2388 residues: MSSTLSPTDFDSLEIQGQYSDINNRWDLPDSDWDNDSSSARLFERSRIKALADEREAVQKKTFTKWVNSHLARVTCRVGDLYSDLRDGRNLLRLLEVLSGETLPKPTKGRMRIHCLENVDKALQFLKEQKVHLENMGSHDIVDGNHRLTLGLVWTIILRFQIQDISVETEDNKEKKSAKDALLLWCQMKTAGYPNVNVHNFTTSWRDGLAFNAIVHKHRPDLLDFESLKKCNAHYNLQNAFNLAEKELGLTKLLDPEDVNVDQPDEKSIITYVATYYHYFSKMKALAVEGKRIGKVLDHAMEAEHLVEKYESLASELLQWIEQTIVTLNDRQLANSLSGVQNQLQSFNSYRTVEKPPKFTEKGNLEVLLFTIQSKLRANNQKVYTPREGRLISDINKAWERLEKAEHERELALRTELIRQEKLEQLAARFDRKAAMRETWLSENQRLVSQDNFGLELAAVEAAVRKHEAIETDIVAYSGRVQAVDAVAAELAAEHYHDIKRIAARQNNVARLWDFLREMVAARRERLLLNLELQKVFQDLLYLMDWMAEMKGRLQSQDLGKHLAGVEDLLQLHELVEADIAVQAERVRAVSASALRFCDPGKEYRPCDPQLVSERVATLEQSYEALCELAATRRARLEESRRLWRFLWEVGEAEAWVREQQHLLASAETGRDLTGVLRLLNKHTALRGEMSGRLGPLKLTLEQGQQLVAEGHPGANQASTRAAELQAQWERLEALAEERAQRLAQAASLYQFQADANDMEAWLVDALRLVSSPEVGHDEFSTQALARQHRALEEEIRAHRPTLDALREQAAALPPALSHTPEVQGRVPTLEQHYEELQARAGERARALEAALAFYTMLSEAGACGLWVEEKEQWLNGLALPERLEDLEVVQQRFETLEPEMNALAARVTAVSDIAEQLLKASPPGKDRIIGTQEQLNQRWQQFRSLADGKKAALTSALSIQNYHLECTETQAWMREKTKVIESTQDLGNDLAGVLALQRKLAGTERDLEAISARVGELTQEANALAAGHPAQAPAINTRLGEVQTGWEDLRATMRRREESLGEARRLQDFLRSLDDFQAWLGRTQTAVASEEGPATLPEAEALLAQHAALRGEVERAQSEYSRLRTLGEEVTRDQADPQCLFLRQRLEALGTGWEELGRMWESRQGRLAQAHGFQGFLRDARQAEGVLSSQEYFLSHTEMPGTLQAADAAIKKLEDFMSTMDANGERIRGLLEAGRQLVSKGNIHAEKIQEKADSIEKRHRKNQEAVQQLLGRLRDNREQQHFLQDCQELKLWIDEKMLTAQDVSYDEARNLHTKWQKHQAFMAELAANKDWLDKVDKEGRELTLEKPELKVLVSEKLEDLHRRWDELETTTQAKARSLFDANRAELFAQSCSALESWLESLQAQLHSDDYGKDLTSVNILLKKQQMLEREMAVREKEVEAIQAQAKALAQEDQSAGEVERTSRAVEEKFRALCQPMKDRCRRLQASREQHQFHRDVEDEILWVTERLPMASSLEHGKDLPSVQLLMKKNQTLQKEIQGHEPRIADLKERQRTLGTAAAGPELAELQEMWKRLSHELELRGKRLEEALRAQQFYRDAAEAEAWMGEQELHMMGQEKAKDELSAQAEVKKHQVLEQALADYAQTIKQLAASSQDMIDHEHPESTRLTIRQAQVDKLYAGLKELAGERRERLQEHLRLCQLRRELDDLEQWIQEREVVAASHELGQDYEHVTMLRDKFREFSRDTSTIGQERVDSANALANGLIAGGHAARATVAEWKDSLNEAWADLLELLDTRGQVLAAAYELQRFLHGARQALARVQHKQQQLPDGTGRDLNAAEALQRRHCAYEHDIQALSTQVQQVQDDGLRLQKAYAGDKAEEIGRHMQAVAEAWAQLQGSSAARRQLLLDTTDKFRFFKAVRELMLWMDGINLQMDAQERPRDVSSADLVIKNQQGIKAEIEARADRFSACIDMGQELLARNHYAAEEISEKLSQLQSRRQETAEKWQEKMDWLQLVLEVLVFGRDAGMAEAWLCSQEPLVRSAELGCTVDEVESLIKRHEAFQKSAVAWEERFSALEKLTALEERENEQKRKREEEERRKQPPTSEPMASQPEGSLVDGQRVLDTAWDGTQSKLPPSTQAPSINGVCTDTESSQPLLEQQRLEQSNVPEGPGSGTGDESSGPRGERQTLPRGPAPSPMPQSRSSESAHVATLPARGAELSAQEQMEGTLCRKQEMEAFNKKAANRSWQNVYCVLRRGSLGFYKDARAASAGVPYHGEVPVSLARAQGSVAFDYRKRKHVFKLGLQDGKEYLFQAKDEAEMSSWLRVVNAAIATASSASGEPEEPVVPSASRGLTRAMTMPPVSQPEGSIVLRSKDGREREREKRFSFFKKNK.

Ser2 bears the N-acetylserine mark. Residues 2 to 278 (SSTLSPTDFD…IITYVATYYH (277 aa)) form an actin-binding region. Ser6 and Ser31 each carry phosphoserine. Calponin-homology (CH) domains follow at residues 57–161 (AVQK…LRFQ) and 176–281 (KSAK…HYFS). 6 Spectrin repeats span residues 306–414 (LVEK…LALR), 427–527 (AARF…RERL), 532–639 (ELQK…RLEE), 642–744 (RLWR…QRLA), 749–849 (LYQF…RALE), and 856–954 (TMLS…KAAL). Position 959 is a phosphoserine (Ser959). Spectrin repeat units lie at residues 960–1063 (IQNY…SLGE), 1066–1169 (RLQD…GRLA), 1174–1266 (FQGF…NQEA), 1279–1379 (EQQH…ARSL), 1384–1485 (RAEL…RRLQ), 1489–1586 (EQHQ…RLEE), 1589–1692 (RAQQ…RLQE), 1696–1797 (LCQL…GQVL), 1801–1904 (YELQ…QLLL), 1910–2010 (FRFF…DWLQ), and 2017–2078 (VFGR…LTAL). Residue Ser1073 is modified to Phosphoserine. Ser1574 bears the Phosphoserine mark. Residues 2080–2096 (ERENEQKRKREEEERRK) show a composition bias toward basic and acidic residues. Disordered regions lie at residues 2080 to 2112 (ERENEQKRKREEEERRKQPPTSEPMASQPEGSL) and 2124 to 2207 (DGTQ…HVAT). The span at 2124 to 2163 (DGTQSKLPPSTQAPSINGVCTDTESSQPLLEQQRLEQSNV) shows a compositional bias: polar residues. Residues Ser2169 and Ser2199 each carry the phosphoserine modification. A PH domain is found at 2218 to 2328 (QEQMEGTLCR…WLRVVNAAIA (111 aa)). Residues 2333–2388 (ASGEPEEPVVPSASRGLTRAMTMPPVSQPEGSIVLRSKDGREREREKRFSFFKKNK) are disordered. A Phosphothreonine modification is found at Thr2354. Ser2359 is modified (phosphoserine). Positions 2368–2381 (RSKDGREREREKRF) are enriched in basic and acidic residues.

The protein belongs to the spectrin family. In terms of tissue distribution, abundantly transcribed in the brain. Neurons are the predominant cell-type to express the gene. Found abundantly in Purkinje cells.

It localises to the cytoplasm. The protein localises to the cytoskeleton. The protein resides in the cell cortex. Its function is as follows. Probably plays an important role in neuronal membrane skeleton. The chain is Spectrin beta chain, non-erythrocytic 2 (Sptbn2) from Rattus norvegicus (Rat).